The chain runs to 288 residues: Pantothenate synthetase (288 aa).

ATP is bound at residue 30–37; that stretch reads MGNLHEGH. The active-site Proton donor is the His-37. Residue Gln-61 participates in (R)-pantoate binding. Gln-61 is a binding site for beta-alanine. 148–151 is a binding site for ATP; sequence GQKD. Gln-154 contributes to the (R)-pantoate binding site. Residues Val-177 and 185–188 contribute to the ATP site; that span reads LSSR.

Belongs to the pantothenate synthetase family. Homodimer.

The protein resides in the cytoplasm. The catalysed reaction is (R)-pantoate + beta-alanine + ATP = (R)-pantothenate + AMP + diphosphate + H(+). It participates in cofactor biosynthesis; (R)-pantothenate biosynthesis; (R)-pantothenate from (R)-pantoate and beta-alanine: step 1/1. Catalyzes the condensation of pantoate with beta-alanine in an ATP-dependent reaction via a pantoyl-adenylate intermediate. This Psychrobacter arcticus (strain DSM 17307 / VKM B-2377 / 273-4) protein is Pantothenate synthetase.